The chain runs to 236 residues: Ubiquinone biosynthesis O-methyltransferase (236 aa).

The S-adenosyl-L-methionine site is built by Arg-39, Gly-59, Asp-80, and Met-124.

It belongs to the methyltransferase superfamily. UbiG/COQ3 family.

The catalysed reaction is a 3-demethylubiquinol + S-adenosyl-L-methionine = a ubiquinol + S-adenosyl-L-homocysteine + H(+). It catalyses the reaction a 3-(all-trans-polyprenyl)benzene-1,2-diol + S-adenosyl-L-methionine = a 2-methoxy-6-(all-trans-polyprenyl)phenol + S-adenosyl-L-homocysteine + H(+). The protein operates within cofactor biosynthesis; ubiquinone biosynthesis. Its function is as follows. O-methyltransferase that catalyzes the 2 O-methylation steps in the ubiquinone biosynthetic pathway. The chain is Ubiquinone biosynthesis O-methyltransferase from Shewanella halifaxensis (strain HAW-EB4).